We begin with the raw amino-acid sequence, 309 residues long: Porphobilinogen deaminase (309 aa).

Cys242 is modified (S-(dipyrrolylmethanemethyl)cysteine).

The protein belongs to the HMBS family. Monomer. Dipyrromethane is required as a cofactor.

The enzyme catalyses 4 porphobilinogen + H2O = hydroxymethylbilane + 4 NH4(+). Its pathway is porphyrin-containing compound metabolism; protoporphyrin-IX biosynthesis; coproporphyrinogen-III from 5-aminolevulinate: step 2/4. Functionally, tetrapolymerization of the monopyrrole PBG into the hydroxymethylbilane pre-uroporphyrinogen in several discrete steps. In Shewanella frigidimarina (strain NCIMB 400), this protein is Porphobilinogen deaminase.